The following is a 7158-amino-acid chain: Twitchin (7158 aa).

2 Ig-like domains span residues 5-97 (PRFT…INLN) and 111-204 (PSFV…LALN). Intrachain disulfides connect Cys-25-Cys-81 and Cys-132-Cys-188. Disordered stretches follow at residues 204 to 381 (NFEE…PIVL), 473 to 639 (EEEL…TKLR), 658 to 732 (KKVK…DSMA), and 763 to 955 (EVKE…IDMR). Over residues 220–238 (TASPRPSSRGPGSRPSSPK) the composition is skewed to low complexity. Composition is skewed to basic and acidic residues over residues 242 to 259 (KSRE…EGSP) and 279 to 291 (ESRR…KMEV). Low complexity-rich tracts occupy residues 319–340 (SPST…RKGS) and 347–368 (SGTT…ASSD). One can recognise an Ig-like 3 domain in the interval 377–466 (PPIVLEASRS…GEGQSSAMVK (90 aa)). Positions 504–513 (RVARRSKSKS) are enriched in basic residues. The span at 514–523 (KSPAPQAKKS) shows a compositional bias: low complexity. Composition is skewed to basic and acidic residues over residues 529 to 540 (GRQEASEVEHKR) and 601 to 618 (KTDS…DTLL). Residues 620 to 630 (KTTTSTKNESS) show a composition bias toward low complexity. One copy of the Kelch 1 repeat lies at 718 to 764 (VKSGAGGLEKSDSMASLKKLDLKKGKIDDNSDGAFKVQLKKVVKKEV). 4 stretches are compositionally biased toward basic and acidic residues: residues 763-813 (EVKE…DKPK), 837-850 (KEVE…ELKA), 885-897 (KAHD…EGIK), and 917-955 (SESR…IDMR). The 93-residue stretch at 980-1072 (PKIVEVPENV…DSADVKLLVT (93 aa)) folds into the Ig-like 4 domain. A disordered region spans residues 1088–1118 (SQAGFQKDGEGGGAGGGGGEKKPMTEAERRQ). Over residues 1106–1118 (GEKKPMTEAERRQ) the composition is skewed to basic and acidic residues. 3 consecutive Ig-like domains span residues 1122 to 1213 (PGKK…AQLT), 1217 to 1306 (PPMK…SKVQ), and 1312 to 1398 (PRHT…AQLI). The cysteines at positions 1150 and 1201 are disulfide-linked. 8 consecutive Fibronectin type-III domains span residues 1598 to 1690 (PKGP…AKNP), 1696 to 1791 (KPKN…MKAK), 1891 to 1988 (PPKG…IKDP), 1994 to 2087 (KPGR…AKPK), 2189 to 2282 (PNGP…AKNP), 2288 to 2383 (KTGT…AKPR), 2483 to 2576 (PLGP…AKNP), and 2579 to 2675 (VPGK…AKPR). One copy of the Kelch 2 repeat lies at 2014–2058 (PPHKDGGAPIEEYIVEVRDPDTKEWKEVKRVPDTNASISGLKEGK). The 96-residue stretch at 2086 to 2181 (PKFIPAWLKH…GADEEKANLT (96 aa)) folds into the Ig-like 8 domain. Residues 2207-2253 (WKPPDDDGGEPIEYYEVEKLDTATGRWVPCAKVKDTKAHIDGLKKGQ) form a Kelch 3 repeat. Positions 2266–2287 (GASDALSTDKDTKAKNPYDEPG) are enriched in basic and acidic residues. A disordered region spans residues 2266–2295 (GASDALSTDKDTKAKNPYDEPGKTGTPDVV). A Kelch 4 repeat occupies 2502–2547 (KVPEDDGGAPIDHYEIEKMDLATGRWVPCGRSETTKTTVPNLQPGH). Residues 2679 to 2763 (PRIHREDLSD…TNINGTDSVT (85 aa)) enclose the Ig-like 9 domain. 2 consecutive Fibronectin type-III domains span residues 2775–2868 (PKGP…AKNP) and 2874–2968 (RPGR…AKPR). One copy of the Kelch 5 repeat lies at 2793-2839 (WKPPEDDGGEPIEFYEIEKMNTKDGIWVPCGRSGDTHFTVDSLNKGD). Residues 2849–2901 (NSEGPSDPLETETDILAKNPFDRPDRPGRPEPTDWDSDHVDLKWDPPLSDGGA) form a disordered region. Residues 2868–2892 (PFDRPDRPGRPEPTDWDSDHVDLKW) show a composition bias toward basic and acidic residues. The Ig-like 10 domain maps to 2972–3062 (PHIDRDALKN…GEDEATVKIN (91 aa)). 2 consecutive Fibronectin type-III domains span residues 3070-3165 (PNGP…AKDP) and 3171-3265 (KTNA…AKAR). The Kelch 6 repeat unit spans residues 3089–3134 (RAPDDDGGIPIENYVIEKYDTASGRWVPAAKVAGDKTTAVVDGLIP). The Ig-like 11 domain maps to 3268–3358 (PPVIDRNSIQ…GTDTAEVKVT (91 aa)). 2 consecutive Fibronectin type-III domains span residues 3365 to 3459 (SPRG…AKDP) and 3465 to 3559 (KPGT…AKPR). The Kelch 7 repeat unit spans residues 3384–3430 (WKEPEDDGGAEISHYVIEKQDAATGRWTACGESKDTNFHVDDLTQGH). The region spanning 3563–3653 (PKINRDMFVA…GKDEHEVDVN (91 aa)) is the Ig-like 12 domain. 6 Fibronectin type-III domains span residues 3661-3753 (PEGP…AKNP), 3759-3853 (APTD…AKPR), 3954-4047 (PEGP…AKNQ), 4053-4146 (PVDK…TKAR), 4246-4340 (PEGP…AKDP), and 4346-4440 (KPGR…TAKP). A Kelch 8 repeat occupies 3972–4018 (WKPPTDNGGTDVLHYIVEKMDTSRGTWQEVGTFPDCTAKVNKLVPGK). 2 Kelch repeats span residues 4265–4310 (KPPK…LTEG) and 4365–4410 (DPPR…RVQK). Positions 4445–4531 (PKFDLDLDGK…GEAEANIKIT (87 aa)) constitute an Ig-like 13 domain. Fibronectin type-III domains lie at 4538–4631 (APEN…IKDP), 4637–4733 (APST…CRPY), 4739–4834 (APDA…IEEQ), 4936–5028 (PTGP…AKNP), 5034–5129 (APGQ…ADNA), 5231–5326 (SPQH…VAKY), 5333–5427 (QPEA…LKSR), and 5430–5528 (PPGP…IQES). One copy of the Kelch 11 repeat lies at 4557-4602 (DAPKDDGGAEIAGYKIEYQEVGSQIWDKVPGLISGTAYTVRGLEHG). One copy of the Kelch 12 repeat lies at 5287–5335 (LNYTVGGLIKDNRYRFRVRAETQYGVSEPCELADVVVAKYQFEVPNQPE). The region spanning 5533-5621 (PQIVVKPEDT…GSDTATANLV (89 aa)) is the Ig-like 14 domain. 2 consecutive Fibronectin type-III domains span residues 5723–5817 (PQGP…ARLP) and 5823–5919 (SPLN…ASGS). A Kelch 13 repeat occupies 5742-5787 (RPPVTDGGSKITSYVVEKRDLSKDEWVTVTSNVKDMNYIVTGLFEN). 2 Ig-like domains span residues 5923–6011 (PKIV…ANLR) and 6016–6107 (PRVF…VNVT). A disulfide bridge links Cys-5944 with Cys-5995. The region spanning 6114-6207 (PPRFPIIENI…PTAPVLIPGD (94 aa)) is the Fibronectin type-III 31 domain. One can recognise a Protein kinase domain in the interval 6261 to 6516 (YDIHEELGTG…IHQALEHPWL (256 aa)). ATP-binding positions include 6267–6275 (LGTGAFGVV) and Lys-6290. Asp-6382 functions as the Proton acceptor in the catalytic mechanism. Positions 6517 to 6581 (TPGNAPGRDS…SIRDAFWDRS (65 aa)) are C-terminal regulatory domain (CDR). 5 consecutive Ig-like domains span residues 6585-6673 (PRFI…VFLN), 6696-6795 (PRVE…CVLT), 6863-6952 (PSFT…ATLT), 6958-7059 (PLLN…ASLV), and 7067-7149 (PPVT…KAIA).

Belongs to the protein kinase superfamily. CAMK Ser/Thr protein kinase family. In terms of assembly, may interact (via protein kinase and CRD domains) with mak-1 (via protein kinase domain). Requires Mg(2+) as cofactor. In terms of processing, phosphorylated by mak-1 on the protein kinase domain and/or CDR domain in vitro. In terms of tissue distribution, expressed in body wall, anal, vulval, and pharyngeal muscles (at protein level).

It is found in the cytoplasm. The protein resides in the myofibril. The protein localises to the sarcomere. Its subcellular location is the a band. The enzyme catalyses L-seryl-[protein] + ATP = O-phospho-L-seryl-[protein] + ADP + H(+). The catalysed reaction is L-threonyl-[protein] + ATP = O-phospho-L-threonyl-[protein] + ADP + H(+). With respect to regulation, forces generated by the contraction/relaxation cycles of muscle activity separate the regulatory domain from the catalytic core, activating the enzyme. At rest, the kinase domain is in a closed conformation. The active site is occupied by the autoinhibitory region (CDR), which makes extensive contact with the catalytic site, blocking substrate binding. At low forces the regulatory tail will unravel reversibly and expose the active site to its substrates, potentially stabilized by binding of Ca/CALM. At high forces the kinase begins to unfold and the integrity of the active site is disrupted. Its function is as follows. Regulator of muscle contraction and relaxation. Senses mechanical strain that occurs during muscle activity by unfolding in clearly resolvable steps at differing forces. Plays a role in the organization of sarcomeres in body wall muscles. This is Twitchin from Caenorhabditis elegans.